The chain runs to 182 residues: UPF0397 protein llmg_0343 (182 aa).

A run of 5 helical transmembrane segments spans residues 8-28 (IVVA…LINI), 42-62 (AVLA…IGFI), 74-94 (APWW…GFGV), 114-134 (IVQF…GDIL), and 146-166 (QGVV…TLLL).

The protein belongs to the UPF0397 family.

Its subcellular location is the cell membrane. This Lactococcus lactis subsp. cremoris (strain MG1363) protein is UPF0397 protein llmg_0343.